Consider the following 216-residue polypeptide: Somatotropin (216 aa).

The signal sequence occupies residues 1–25; it reads MAPGSWFSPLLIAVVTLGLPQEAAA. Histidine 45 is a binding site for Zn(2+). A disulfide bond links cysteine 78 and cysteine 189. Glutamate 198 lines the Zn(2+) pocket. An intrachain disulfide couples cysteine 206 to cysteine 214.

This sequence belongs to the somatotropin/prolactin family.

It localises to the secreted. In terms of biological role, growth hormone plays an important role in growth control. The protein is Somatotropin (GH) of Gallus gallus (Chicken).